A 177-amino-acid chain; its full sequence is Inorganic pyrophosphatase (177 aa).

Substrate contacts are provided by K30, R44, and Y56. Mg(2+)-binding residues include D66, D71, and D103. Residue Y142 coordinates substrate.

Belongs to the PPase family. As to quaternary structure, homohexamer. It depends on Mg(2+) as a cofactor.

Its subcellular location is the cytoplasm. It carries out the reaction diphosphate + H2O = 2 phosphate + H(+). Its function is as follows. Catalyzes the hydrolysis of inorganic pyrophosphate (PPi) forming two phosphate ions. The polypeptide is Inorganic pyrophosphatase (Mesorhizobium japonicum (strain LMG 29417 / CECT 9101 / MAFF 303099) (Mesorhizobium loti (strain MAFF 303099))).